A 693-amino-acid polypeptide reads, in one-letter code: Elongation factor G (693 aa).

Residues 8-283 (NRIRNIGIAA…AVIDYLPAPT (276 aa)) enclose the tr-type G domain. GTP contacts are provided by residues 17–24 (AHIDAGKT), 81–85 (DTPGH), and 135–138 (NKMD).

It belongs to the TRAFAC class translation factor GTPase superfamily. Classic translation factor GTPase family. EF-G/EF-2 subfamily.

Its subcellular location is the cytoplasm. Catalyzes the GTP-dependent ribosomal translocation step during translation elongation. During this step, the ribosome changes from the pre-translocational (PRE) to the post-translocational (POST) state as the newly formed A-site-bound peptidyl-tRNA and P-site-bound deacylated tRNA move to the P and E sites, respectively. Catalyzes the coordinated movement of the two tRNA molecules, the mRNA and conformational changes in the ribosome. The sequence is that of Elongation factor G from Wolinella succinogenes (strain ATCC 29543 / DSM 1740 / CCUG 13145 / JCM 31913 / LMG 7466 / NCTC 11488 / FDC 602W) (Vibrio succinogenes).